Here is a 292-residue protein sequence, read N- to C-terminus: GTP cyclohydrolase FolE2 (292 aa).

This sequence belongs to the GTP cyclohydrolase IV family.

The enzyme catalyses GTP + H2O = 7,8-dihydroneopterin 3'-triphosphate + formate + H(+). It functions in the pathway cofactor biosynthesis; 7,8-dihydroneopterin triphosphate biosynthesis; 7,8-dihydroneopterin triphosphate from GTP: step 1/1. Its function is as follows. Converts GTP to 7,8-dihydroneopterin triphosphate. The protein is GTP cyclohydrolase FolE2 of Staphylococcus haemolyticus (strain JCSC1435).